The sequence spans 226 residues: Elongation factor 1-delta (226 aa).

Positions 82 to 131 are disordered; sequence SSVATPPVADTKASAAEDDDDDDVDLFGEETEEEKKASEERAAAVKASGK. Over residues 97–113 the composition is skewed to acidic residues; it reads AEDDDDDDVDLFGEETE. The span at 114-124 shows a compositional bias: basic and acidic residues; sequence EEKKASEERAA.

Belongs to the EF-1-beta/EF-1-delta family. EF-1 is composed of 4 subunits: alpha, beta (1B-alpha=beta'), delta (1B-beta), and gamma (1B-gamma).

Functionally, EF-1-beta and EF-1-beta' stimulate the exchange of GDP bound to EF-1-alpha to GTP. In Spuriopimpinella brachycarpa (Chamnamul), this protein is Elongation factor 1-delta.